An 871-amino-acid chain; its full sequence is MVNIKEKLFVYLHDPPDKALKIENHEERSKKILSSGNIQYSRTDKVKQADALSSKTQRFIIRTKENKEPVIDFLGRSSGKYFHVGYPVFIHPISTEIKRYETLEKYIDLGRSNRGERFVNEFLERVSKLEGDVLKEVFEDASNKFKGEESKQWAYIWQFYPVKLKEGVKEFAKSELKLKEEEAEKFAEEFVNLPADTRFPDHAIWTHLDLTSALSVKDPTLLRIKIVPVQPFIANSRKQLDLWASSHLLSMLMYKALEVIVDKFGPEHVIYPSLRDQPFFLKFYLGENIGDEILVANLPNKALAIVSGKEAEKIEEEIKKRIRDFLLQLYREAVDWAVENGVVKVDRSEKDSMLKEAYLKIVREYFTVSITWVSLSEKEDIYQVTENAGLSDEDVKKWLKFAEKKENSRVLERIAIYPLLVKILDSLGERKVTEERFEKSEQLKGWKCHVCGENLAIFGDMYDHDNLKSLWLDEEPLCPMCLIKRYYPVWIRSKTGQKIRFESVVDVALLYKNWRKIFDEKYGKDLVSKAREVSEDFVKDNMLVDSDLYYSSTWESGLSKKLKNKKEIDEEKVKEVVDFLNAAYKEIGNPPKYYAILVMDGDDMGKVISGEVLGEISTRIHPNIRDYVEIPEAKYYSTPQVHVAISQALANFSIREVRSVVKDEGLLIYAGGDDVLAILPVDKALEVAYKIRKEFGKSFENGSLLPGWKLSAGILIVHYKHPLYDALEKARDLLNNKAKNVPGKDTLAIGLLKRSGSYYISLVGWELIRVFYNSELRKKLLEEKGGVGKRFIYHVLREVDTWPKVGIDEMLKFEVIRHIRGRNKEETKELREKIYGEIKDLLEHVRGNNEVEKVRGLFTFLKIITDAEVFP.

Residues 1–215 are not required for target RNA cleavage; that stretch reads MVNIKEKLFV…THLDLTSALS (215 aa). 3 residues coordinate Mn(2+): H13, D14, and H25. Zn(2+) contacts are provided by C448, C451, C478, and C481. One can recognise a GGDEF domain in the interval 592–752; it reads KYYAILVMDG…GKDTLAIGLL (161 aa). D600, E656, D673, D674, E694, and E700 together coordinate Mn(2+).

This sequence belongs to the CRISPR system Cmr2 family. As to quaternary structure, part of the type III-B Cmr ribonucleoprotein (RNP) complex, an elongated RNP with Cmr2 and Cmr3 as the base, with Cmr4 and Cmr5 forming a helical core along the mature crRNA (39 or 45 nt in length), while the complex is capped by Cmr6 and Cmr1. The 5' end of the crRNA is bound to Cmr2 and Cmr3, while Cmr6 and a Cmr1 subunit (Cmr1-1 or Cmr1-2) cap the 3' end of the crRNA. The target RNA lies antiparallel to the crRNA, with its 5' end near Cmr1 and Cmr6 and its 3' end near Cmr2 and Cmr3; major target cleavage occurs nears the junction of Cmr1/Cmr6 and Cmr4/Cmr, with minor cleavage occurring at 6 nt intervals which coincide with the proposed spacing of Cmr4 subunits. Forms a 1:1 complex with Cmr3. The Cmr2-Cmr3 complex non-specifically binds ss-target RNA and crRNA. Interacts with Cmr3, Cmr4 and Cmr5. It depends on Ca(2+) as a cofactor. Requires Mn(2+) as cofactor. Zn(2+) is required as a cofactor.

The protein localises to the cytoplasm. Its function is as follows. CRISPR (clustered regularly interspaced short palindromic repeat), is an adaptive immune system that provides protection against mobile genetic elements (viruses, transposable elements and conjugative plasmids). CRISPR clusters contain sequences complementary to antecedent mobile elements and target invading nucleic acids. CRISPR clusters are transcribed and processed into CRISPR RNA (crRNA), formerly called psiRNA (prokaryotic silencing) in this organism. Part of the Cmr ribonucleoprotein complex which has divalent cation-dependent endoribonuclease activity specific for ssRNA complementary to the crRNA (target RNA), generating 5' hydroxy- and 3' phosphate or 2'-3' cyclic phosphate termini. Cmr4 is probably the subunit that cleaves target RNA. Cmr complex does not cleave ssDNA complementary to the crRNA. Cleavage of target RNA is guided by the crRNA; substrate cleavage occurs a fixed distance (14 nt) from the 3' end of the crRNA. In vitro reconstitution shows Cmr1-2 and Cmr5 are not absolutely necessary for target cleavage. In Pyrococcus furiosus (strain ATCC 43587 / DSM 3638 / JCM 8422 / Vc1), this protein is CRISPR system Cmr subunit Cmr2.